A 203-amino-acid chain; its full sequence is uncharacterized protein (203 aa).

An N-terminal signal peptide occupies residues 1 to 23 (MKKIYKALISSLLLSTSINVAYA). The SH3b domain maps to 24 to 87 (ETQYVTENLS…ILNSDLSSTP (64 aa)). Residues 167-189 (IAIQWFIYGGSVLGVGLLFGLLI) traverse the membrane as a helical segment.

This sequence to E.coli YgiM.

It is found in the membrane. This is an uncharacterized protein from Haemophilus influenzae (strain ATCC 51907 / DSM 11121 / KW20 / Rd).